Reading from the N-terminus, the 215-residue chain is Small ribosomal subunit protein uS7 (215 aa).

Belongs to the universal ribosomal protein uS7 family. Part of the 30S ribosomal subunit.

Functionally, one of the primary rRNA binding proteins, it binds directly to 16S rRNA where it nucleates assembly of the head domain of the 30S subunit. Is located at the subunit interface close to the decoding center. The protein is Small ribosomal subunit protein uS7 of Pyrococcus furiosus (strain ATCC 43587 / DSM 3638 / JCM 8422 / Vc1).